Consider the following 143-residue polypeptide: Actin-depolymerizing factor 5 (143 aa).

An ADF-H domain is found at 11 to 143; it reads GMNVKEECQR…GYDVIRGRAQ (133 aa).

It belongs to the actin-binding proteins ADF family.

In terms of biological role, actin-depolymerizing protein. Severs actin filaments (F-actin) and binds to actin monomers. This chain is Actin-depolymerizing factor 5 (ADF5), found in Oryza sativa subsp. japonica (Rice).